The chain runs to 99 residues: NADH-quinone oxidoreductase subunit K (99 aa).

3 helical membrane passes run 3-23 (PDNY…GVLL), 28-48 (IVVF…FVAF), and 59-79 (VVAF…LAII).

The protein belongs to the complex I subunit 4L family. In terms of assembly, NDH-1 is composed of 14 different subunits. Subunits NuoA, H, J, K, L, M, N constitute the membrane sector of the complex.

It localises to the cell membrane. It catalyses the reaction a quinone + NADH + 5 H(+)(in) = a quinol + NAD(+) + 4 H(+)(out). Functionally, NDH-1 shuttles electrons from NADH, via FMN and iron-sulfur (Fe-S) centers, to quinones in the respiratory chain. The immediate electron acceptor for the enzyme in this species is believed to be a menaquinone. Couples the redox reaction to proton translocation (for every two electrons transferred, four hydrogen ions are translocated across the cytoplasmic membrane), and thus conserves the redox energy in a proton gradient. In Mycobacterium sp. (strain JLS), this protein is NADH-quinone oxidoreductase subunit K.